The primary structure comprises 551 residues: Membrane protein insertase YidC (551 aa).

A helical transmembrane segment spans residues 3-23; sequence ANHIRILLLVTIAIMFISLMG. Residues 33–47 show a composition bias toward polar residues; that stretch reads NTKQQTSATQNNSHY. Residues 33–58 form a disordered region; that stretch reads NTKQQTSATQNNSHYDNADSSTNTDV. 3 consecutive transmembrane segments (helical) span residues 361–381, 431–451, and 504–524; these read LVGNWGLAIILVTCLIKLIFY, LSGCLPMLIQIPIFISLYWVL, and VMMFLPVIFTFLFASFPSGLV.

This sequence belongs to the OXA1/ALB3/YidC family. Type 1 subfamily. As to quaternary structure, interacts with the Sec translocase complex via SecD. Specifically interacts with transmembrane segments of nascent integral membrane proteins during membrane integration.

Its subcellular location is the cell inner membrane. Its function is as follows. Required for the insertion and/or proper folding and/or complex formation of integral membrane proteins into the membrane. Involved in integration of membrane proteins that insert both dependently and independently of the Sec translocase complex, as well as at least some lipoproteins. Aids folding of multispanning membrane proteins. This chain is Membrane protein insertase YidC, found in Francisella tularensis subsp. novicida (strain U112).